The chain runs to 382 residues: MHINGPSGPQAYVNDSLGDGSVFPMGHGYPAEYQHMVHAHWRGFREAPIYYHAGFYIAFIVLMLSSIFGNGLVIWIFSTSKSLRTPSNLLILNLAIFDLFMCTNMPHYLINATVGYIVGGDLGCDIYALNGGISGMGASITNAFIAFDRYKTISNPIDGRLSYGQIVLLILFTWLWATPFSVLPLFQIWGRYQPEGFLTTCSFDYLTNTDENRLFVRTIFVWSYVIPMTMILVSYYKLFTHVRVHEKMLAEQAKKMNVKSLSANANADNMSVELRIAKAALIIYMLFILAWTPYSVVALIGCFGEQQLITPFVSMLPCLACKSVSCLDPWVYATSHPKYRLELERRLPWLGIREKHATSGTSGGQESVASVSGDTLALSVQN.

The Extracellular portion of the chain corresponds to 1–49 (MHINGPSGPQAYVNDSLGDGSVFPMGHGYPAEYQHMVHAHWRGFREAPI). N-linked (GlcNAc...) asparagine glycosylation occurs at N14. Residues 50-76 (YYHAGFYIAFIVLMLSSIFGNGLVIWI) traverse the membrane as a helical segment. The Cytoplasmic portion of the chain corresponds to 77-88 (FSTSKSLRTPSN). The chain crosses the membrane as a helical span at residues 89 to 112 (LLILNLAIFDLFMCTNMPHYLINA). Topologically, residues 113 to 127 (TVGYIVGGDLGCDIY) are extracellular. The cysteines at positions 124 and 201 are disulfide-linked. The chain crosses the membrane as a helical span at residues 128–147 (ALNGGISGMGASITNAFIAF). The Cytoplasmic portion of the chain corresponds to 148 to 165 (DRYKTISNPIDGRLSYGQ). Residues 166 to 190 (IVLLILFTWLWATPFSVLPLFQIWG) traverse the membrane as a helical segment. Residues 191–214 (RYQPEGFLTTCSFDYLTNTDENRL) are Extracellular-facing. A helical membrane pass occupies residues 215–242 (FVRTIFVWSYVIPMTMILVSYYKLFTHV). Residues 243–278 (RVHEKMLAEQAKKMNVKSLSANANADNMSVELRIAK) lie on the Cytoplasmic side of the membrane. The chain crosses the membrane as a helical span at residues 279-302 (AALIIYMLFILAWTPYSVVALIGC). Topologically, residues 303–310 (FGEQQLIT) are extracellular. The chain crosses the membrane as a helical span at residues 311-335 (PFVSMLPCLACKSVSCLDPWVYATS). K322 carries the N6-(retinylidene)lysine modification. Residues 336–382 (HPKYRLELERRLPWLGIREKHATSGTSGGQESVASVSGDTLALSVQN) lie on the Cytoplasmic side of the membrane. Residues 357-382 (ATSGTSGGQESVASVSGDTLALSVQN) form a disordered region. Residues 358-382 (TSGTSGGQESVASVSGDTLALSVQN) show a composition bias toward polar residues.

The protein belongs to the G-protein coupled receptor 1 family. Opsin subfamily. Post-translationally, phosphorylated on some or all of the serine and threonine residues present in the C-terminal region. As to expression, expressed specifically in the retina. Each Drosophila eye is composed of 800 facets or ommatidia. Each ommatidium contains 8 photoreceptor cells (R1-R8), the R1 to R6 cells are outer cells, while R7 and R8 are inner cells. Rh5 is expressed only in R8 photoreceptor cells in a subset of ommatidia.

The protein resides in the cell projection. Its subcellular location is the rhabdomere membrane. Visual pigments are the light-absorbing molecules that mediate vision. They consist of an apoprotein, opsin, covalently linked to cis-retinal. In Drosophila melanogaster (Fruit fly), this protein is Opsin Rh5 (Rh5).